The following is a 446-amino-acid chain: Casein kinase I homolog 1 (446 aa).

Positions 12-274 (YKVGRRIGEG…FDATPDYDYL (263 aa)) constitute a Protein kinase domain. Residues 18–26 (IGEGSFGVI) and K41 each bind ATP. Catalysis depends on D131, which acts as the Proton acceptor. Residues 308 to 430 (KSRNAETENQ…ETEAPKKKKS (123 aa)) are disordered. The residue at position 329 (S329) is a Phosphoserine. Over residues 332–345 (PALQNHASTQNVVS) the composition is skewed to polar residues. Basic and acidic residues predominate over residues 346–355 (KRSDYEKPFA). The segment covering 360–397 (NSASDSAEPNQNSLPNPPTETKATTTVPDRSGLATNQP) has biased composition (polar residues). Basic and acidic residues predominate over residues 401 to 412 (DVHDSSEERVTR).

This sequence belongs to the protein kinase superfamily. CK1 Ser/Thr protein kinase family. Casein kinase I subfamily.

The protein resides in the cytoplasm. It catalyses the reaction L-seryl-[protein] + ATP = O-phospho-L-seryl-[protein] + ADP + H(+). The enzyme catalyses L-threonyl-[protein] + ATP = O-phospho-L-threonyl-[protein] + ADP + H(+). Its function is as follows. Casein kinases are operationally defined by their preferential utilization of acidic proteins such as caseins as substrates. In Schizosaccharomyces pombe (strain 972 / ATCC 24843) (Fission yeast), this protein is Casein kinase I homolog 1 (cki1).